Reading from the N-terminus, the 438-residue chain is Proline--tRNA ligase (438 aa).

Belongs to the class-II aminoacyl-tRNA synthetase family. ProS type 2 subfamily. In terms of assembly, homodimer.

The protein resides in the cytoplasm. The catalysed reaction is tRNA(Pro) + L-proline + ATP = L-prolyl-tRNA(Pro) + AMP + diphosphate. Catalyzes the attachment of proline to tRNA(Pro) in a two-step reaction: proline is first activated by ATP to form Pro-AMP and then transferred to the acceptor end of tRNA(Pro). The chain is Proline--tRNA ligase from Rickettsia canadensis (strain McKiel).